A 417-amino-acid polypeptide reads, in one-letter code: NADH-quinone oxidoreductase subunit D (417 aa).

Belongs to the complex I 49 kDa subunit family. NDH-1 is composed of 14 different subunits. Subunits NuoB, C, D, E, F, and G constitute the peripheral sector of the complex.

Its subcellular location is the cell inner membrane. The catalysed reaction is a quinone + NADH + 5 H(+)(in) = a quinol + NAD(+) + 4 H(+)(out). NDH-1 shuttles electrons from NADH, via FMN and iron-sulfur (Fe-S) centers, to quinones in the respiratory chain. The immediate electron acceptor for the enzyme in this species is believed to be ubiquinone. Couples the redox reaction to proton translocation (for every two electrons transferred, four hydrogen ions are translocated across the cytoplasmic membrane), and thus conserves the redox energy in a proton gradient. The sequence is that of NADH-quinone oxidoreductase subunit D from Nitrosococcus oceani (strain ATCC 19707 / BCRC 17464 / JCM 30415 / NCIMB 11848 / C-107).